A 400-amino-acid polypeptide reads, in one-letter code: Serine/threonine transporter SstT (400 aa).

A run of 9 helical transmembrane segments spans residues 14 to 34 (IIIA…VTPY), 48 to 68 (SVAP…FQVG), 76 to 96 (VLLL…IASL), 136 to 156 (AISE…GLAM), 177 to 197 (IIHK…AVTF), 211 to 231 (LLVV…PILV), 285 to 305 (IPLG…VLTL), 311 to 331 (LGIH…TISA), and 349 to 371 (CSLF…IISV).

This sequence belongs to the dicarboxylate/amino acid:cation symporter (DAACS) (TC 2.A.23) family.

It localises to the cell inner membrane. The catalysed reaction is L-serine(in) + Na(+)(in) = L-serine(out) + Na(+)(out). It carries out the reaction L-threonine(in) + Na(+)(in) = L-threonine(out) + Na(+)(out). Functionally, involved in the import of serine and threonine into the cell, with the concomitant import of sodium (symport system). The sequence is that of Serine/threonine transporter SstT from Acinetobacter baumannii (strain AB307-0294).